A 274-amino-acid chain; its full sequence is Rhamnulose-1-phosphate aldolase (274 aa).

Glutamate 117 is a catalytic residue. Zn(2+) is bound by residues histidine 141, histidine 143, and histidine 212.

It belongs to the aldolase class II family. RhaD subfamily. Homotetramer. Zn(2+) serves as cofactor.

The protein resides in the cytoplasm. The enzyme catalyses L-rhamnulose 1-phosphate = (S)-lactaldehyde + dihydroxyacetone phosphate. It functions in the pathway carbohydrate degradation; L-rhamnose degradation; glycerone phosphate from L-rhamnose: step 3/3. In terms of biological role, catalyzes the reversible cleavage of L-rhamnulose-1-phosphate to dihydroxyacetone phosphate (DHAP) and L-lactaldehyde. The sequence is that of Rhamnulose-1-phosphate aldolase from Escherichia coli O7:K1 (strain IAI39 / ExPEC).